The chain runs to 277 residues: Eukaryotic translation initiation factor 3 subunit J (277 aa).

The tract at residues 1 to 80 (MSWDDEDFAV…PAATKNTMLD (80 aa)) is disordered. Positions 23-43 (WDDEFAENDDEPVLESWEDEE) are enriched in acidic residues. The span at 50 to 75 (KAAAAAAAKAPKKASPSPAATPAATK) shows a compositional bias: low complexity. The stretch at 199–230 (TVENIRQTIATLNVLMKDKEREERQARLAKVK) forms a coiled coil. The tract at residues 257–277 (DNDFDLGGNDNFDDFGEDDFM) is disordered. Residues 267 to 277 (NFDDFGEDDFM) show a composition bias toward acidic residues.

Belongs to the eIF-3 subunit J family. As to quaternary structure, component of the eukaryotic translation initiation factor 3 (eIF-3) complex.

Its subcellular location is the cytoplasm. In terms of biological role, component of the eukaryotic translation initiation factor 3 (eIF-3) complex, which is involved in protein synthesis of a specialized repertoire of mRNAs and, together with other initiation factors, stimulates binding of mRNA and methionyl-tRNAi to the 40S ribosome. The eIF-3 complex specifically targets and initiates translation of a subset of mRNAs involved in cell proliferation. This chain is Eukaryotic translation initiation factor 3 subunit J, found in Kluyveromyces lactis (strain ATCC 8585 / CBS 2359 / DSM 70799 / NBRC 1267 / NRRL Y-1140 / WM37) (Yeast).